An 88-amino-acid polypeptide reads, in one-letter code: Small ribosomal subunit protein uS15 (88 aa).

It belongs to the universal ribosomal protein uS15 family. As to quaternary structure, part of the 30S ribosomal subunit. Forms a bridge to the 50S subunit in the 70S ribosome, contacting the 23S rRNA.

One of the primary rRNA binding proteins, it binds directly to 16S rRNA where it helps nucleate assembly of the platform of the 30S subunit by binding and bridging several RNA helices of the 16S rRNA. Functionally, forms an intersubunit bridge (bridge B4) with the 23S rRNA of the 50S subunit in the ribosome. This chain is Small ribosomal subunit protein uS15, found in Polaromonas naphthalenivorans (strain CJ2).